The following is a 355-amino-acid chain: MSERFCIALDAMGGDHAPDMVVAGADIARERCPNVDYLFVGDEERIRPLLDKYPALAAVSTVRHTPDAVAGDAKPSVALRTGRNSSMRLAIDAVAAGDAACVVSAGNTGALMAMAKFVLKTLPGIDRPAIASFFPTLRGESVMLDLGANLECDADNLVQFAVMGTVFSRTVLGLLEPTVGLLNVGSEEQKGHGSIRQAASALRASALAKNFRGFVEGNDIAAGTVDVIVTDGFSGNIALKTAEGTAKLYAEFLKRTFKSSLLAKLGYLLAHGAFQKLRLRTDPRRYNGAMFLGLRGVCVKSHGGTDAVGFANAIGVASDLVVHGFNEKIRDELARLQAALEAAALSPESTEAAAV.

The protein belongs to the PlsX family. Homodimer. Probably interacts with PlsY.

The protein localises to the cytoplasm. It catalyses the reaction a fatty acyl-[ACP] + phosphate = an acyl phosphate + holo-[ACP]. It participates in lipid metabolism; phospholipid metabolism. Functionally, catalyzes the reversible formation of acyl-phosphate (acyl-PO(4)) from acyl-[acyl-carrier-protein] (acyl-ACP). This enzyme utilizes acyl-ACP as fatty acyl donor, but not acyl-CoA. This Rhodospirillum centenum (strain ATCC 51521 / SW) protein is Phosphate acyltransferase.